The primary structure comprises 373 residues: Queuine tRNA-ribosyltransferase (373 aa).

Aspartate 93 functions as the Proton acceptor in the catalytic mechanism. Substrate contacts are provided by residues aspartate 93–phenylalanine 97, aspartate 147, glutamine 190, and glycine 219. Residues glycine 250–aspartate 256 form an RNA binding region. The active-site Nucleophile is aspartate 269. The segment at threonine 274–arginine 278 is RNA binding; important for wobble base 34 recognition. The Zn(2+) site is built by cysteine 307, cysteine 309, cysteine 312, and histidine 338.

This sequence belongs to the queuine tRNA-ribosyltransferase family. In terms of assembly, homodimer. Within each dimer, one monomer is responsible for RNA recognition and catalysis, while the other monomer binds to the replacement base PreQ1. It depends on Zn(2+) as a cofactor.

The catalysed reaction is 7-aminomethyl-7-carbaguanine + guanosine(34) in tRNA = 7-aminomethyl-7-carbaguanosine(34) in tRNA + guanine. Its pathway is tRNA modification; tRNA-queuosine biosynthesis. Its function is as follows. Catalyzes the base-exchange of a guanine (G) residue with the queuine precursor 7-aminomethyl-7-deazaguanine (PreQ1) at position 34 (anticodon wobble position) in tRNAs with GU(N) anticodons (tRNA-Asp, -Asn, -His and -Tyr). Catalysis occurs through a double-displacement mechanism. The nucleophile active site attacks the C1' of nucleotide 34 to detach the guanine base from the RNA, forming a covalent enzyme-RNA intermediate. The proton acceptor active site deprotonates the incoming PreQ1, allowing a nucleophilic attack on the C1' of the ribose to form the product. After dissociation, two additional enzymatic reactions on the tRNA convert PreQ1 to queuine (Q), resulting in the hypermodified nucleoside queuosine (7-(((4,5-cis-dihydroxy-2-cyclopenten-1-yl)amino)methyl)-7-deazaguanosine). The chain is Queuine tRNA-ribosyltransferase from Fusobacterium nucleatum subsp. nucleatum (strain ATCC 25586 / DSM 15643 / BCRC 10681 / CIP 101130 / JCM 8532 / KCTC 2640 / LMG 13131 / VPI 4355).